A 29-amino-acid chain; its full sequence is Glucagon (29 aa).

This sequence belongs to the glucagon family.

It is found in the secreted. Glucagon plays a key role in glucose metabolism and homeostasis. Regulates blood glucose by increasing gluconeogenesis and decreasing glycolysis. The sequence is that of Glucagon (gcg) from Callorhinchus milii (Ghost shark).